The following is a 271-amino-acid chain: Glutamate racemase (271 aa).

Substrate contacts are provided by residues 10-11 (DS) and 42-43 (YG). Residue Cys-73 is the Proton donor/acceptor of the active site. 74–75 (NT) provides a ligand contact to substrate. Cys-183 acts as the Proton donor/acceptor in catalysis. A substrate-binding site is contributed by 184-185 (TH).

Belongs to the aspartate/glutamate racemases family.

It catalyses the reaction L-glutamate = D-glutamate. It participates in cell wall biogenesis; peptidoglycan biosynthesis. In terms of biological role, provides the (R)-glutamate required for cell wall biosynthesis. The chain is Glutamate racemase from Lactococcus lactis subsp. cremoris (strain MG1363).